The following is a 545-amino-acid chain: MAKEILFNIDARDQLKKGVDALANAVKVTLGPKGRNVIIEKKFGAPHITKDGVTVAKEIELADAYQNTGAQLVKEVASKTGDDAGDGTTTATVLAQAIVAEGLKNVTAGASPMDIKRGIDKAVAKVVESIKAQAETVGDNYDKIEQVATVSANNDPVIGKLIADAMRKVSKDGVITIEEAKGTDTTIGVVEGMQFDRGYLSAYFVTNTEKMECEMEKPYILIYDKKISNLKDFLPILEPAVQTGRPLLVIAEDVDSEALTTLVVNRLRSQLKICAVKAPGFGDRRKEMLEDIAILTGGVVISEEKGLKLEQATIEMLGTADKVTVSKDYTTIVNGAGVKENIKERCDQIKAQIVATKSDYDREKLQERLAKLSGGVAVLYVGAASEVEMKEKKDRVDDALRATRAAIEEGIIPGGGVAYIRAIDSLEGMKGDNADETTGIGIIKRAIEEPLREIVANAGKEGAVVVQKVREGKGDFGYNARTDVYENLHAAGVVDPAKVARVALENAASIAGMFLTTECVIVEKKEDKPEMPMGAPGMGGMGGMM.

Residues 29 to 32, Lys-50, 86 to 90, Gly-415, and Asp-495 contribute to the ATP site; these read TLGP and DGTTT.

This sequence belongs to the chaperonin (HSP60) family. Forms a cylinder of 14 subunits composed of two heptameric rings stacked back-to-back. Interacts with the co-chaperonin GroES.

The protein resides in the cytoplasm. The enzyme catalyses ATP + H2O + a folded polypeptide = ADP + phosphate + an unfolded polypeptide.. Together with its co-chaperonin GroES, plays an essential role in assisting protein folding. The GroEL-GroES system forms a nano-cage that allows encapsulation of the non-native substrate proteins and provides a physical environment optimized to promote and accelerate protein folding. The protein is Chaperonin GroEL of Bacteroides thetaiotaomicron (strain ATCC 29148 / DSM 2079 / JCM 5827 / CCUG 10774 / NCTC 10582 / VPI-5482 / E50).